The chain runs to 206 residues: Ras-related protein Ral-B (206 aa).

Position 21-29 (21-29) interacts with GTP; that stretch reads GSGGVGKSA. The Effector region motif lies at 43-51; it reads YEPTKADSY. GTP contacts are provided by residues 68-72, 128-131, and 158-160; these read DTAGQ, NKSD, and SAK. The tract at residues 181 to 206 is disordered; sequence MSENKDKNGRKSSKSKKSFKERCCLL. Cysteine 203 carries the cysteine methyl ester modification. Residue cysteine 203 is the site of S-geranylgeranyl cysteine attachment. The propeptide at 204–206 is removed in mature form; it reads CLL.

The protein belongs to the small GTPase superfamily. Ras family. In terms of assembly, interacts with EXOC2/Sec5 and EXOC8/Exo84. Interacts (via effector domain) with RALBP1. Prenylation is essential for membrane localization. In terms of processing, the farnesylated form confers resistance to the proapoptotic and anti-anchorage-dependent growth effects of some geranylgeranyltransferase I inhibitors.

It localises to the cell membrane. The protein resides in the midbody. It catalyses the reaction GTP + H2O = GDP + phosphate + H(+). With respect to regulation, alternates between an inactive form bound to GDP and an active form bound to GTP. Activated by a guanine nucleotide-exchange factor (GEF) and inactivated by a GTPase-activating protein (GAP). Its function is as follows. Multifunctional GTPase involved in a variety of cellular processes including gene expression, cell migration, cell proliferation, oncogenic transformation and membrane trafficking. Accomplishes its multiple functions by interacting with distinct downstream effectors. Acts as a GTP sensor for GTP-dependent exocytosis of dense core vesicles. Required both to stabilize the assembly of the exocyst complex and to localize functional exocyst complexes to the leading edge of migrating cells. Required for suppression of apoptosis. In late stages of cytokinesis, upon completion of the bridge formation between dividing cells, mediates exocyst recruitment to the midbody to drive abscission. Involved in ligand-dependent receptor mediated endocytosis of the EGF and insulin receptors. The chain is Ras-related protein Ral-B (Ralb) from Mus musculus (Mouse).